The following is a 297-amino-acid chain: E3 ubiquitin-protein ligase TRIM52 (297 aa).

The segment at 20–62 (CAICLDYFKDPVSISCGHNFCRGCVTQLWSKEDEEDQNEEEDE) adopts an RING-type; degenerate zinc-finger fold. The interval 72-167 (VGAMDGWDGS…DEDEDEELYP (96 aa)) is important for rapid proteolytic degradation by the proteasome. The B box-type zinc finger occupies 222–263 (NDQGMCFKHQEALKLFCEVDKEAICVVCRESRSHKQHSVLPL). Positions 227, 230, 249, and 255 each coordinate Zn(2+).

This sequence belongs to the TRIM/RBCC family. In terms of assembly, (Microbial infection) Interacts with Japanese encephalitis virus non-structural protein 2 (NS2A); mediates the ubiquitination of NS2A, targeting it for proteasome-mediated degradation. Post-translationally, autoubiquitinated. Polyubiquitinated. Undergoes extremely rapid proteolytic degradation by the proteasome.

It localises to the cytoplasm. The protein localises to the cytosol. It is found in the nucleus. The catalysed reaction is S-ubiquitinyl-[E2 ubiquitin-conjugating enzyme]-L-cysteine + [acceptor protein]-L-lysine = [E2 ubiquitin-conjugating enzyme]-L-cysteine + N(6)-ubiquitinyl-[acceptor protein]-L-lysine.. Its pathway is protein modification; protein ubiquitination. Its function is as follows. E3 ubiquitin-protein ligase. Positively regulates the NF-kappa-B signaling pathway. (Microbial infection) Exhibits antiviral activity against Japanese encephalitis virus (JEV). Ubiquitinates the viral non-structural protein 2 (NS2A) and targets it for proteasome-mediated degradation. The protein is E3 ubiquitin-protein ligase TRIM52 (TRIM52) of Homo sapiens (Human).